Consider the following 152-residue polypeptide: UPF0266 membrane protein YobD (152 aa).

Helical transmembrane passes span 6 to 26 (LVLILFIAALLAYALYDQFIM), 45 to 65 (VDSVIFVGLVAILIYNNVTSH), and 67 to 87 (AQMTTWLLSALALMGFYIFWI).

This sequence belongs to the UPF0266 family.

It is found in the cell inner membrane. In Salmonella dublin (strain CT_02021853), this protein is UPF0266 membrane protein YobD.